Here is a 458-residue protein sequence, read N- to C-terminus: 3-isopropylmalate dehydratase large subunit (458 aa).

[4Fe-4S] cluster contacts are provided by Cys-339, Cys-399, and Cys-402.

This sequence belongs to the aconitase/IPM isomerase family. LeuC type 1 subfamily. In terms of assembly, heterodimer of LeuC and LeuD. It depends on [4Fe-4S] cluster as a cofactor.

It carries out the reaction (2R,3S)-3-isopropylmalate = (2S)-2-isopropylmalate. It functions in the pathway amino-acid biosynthesis; L-leucine biosynthesis; L-leucine from 3-methyl-2-oxobutanoate: step 2/4. Its function is as follows. Catalyzes the isomerization between 2-isopropylmalate and 3-isopropylmalate, via the formation of 2-isopropylmaleate. This chain is 3-isopropylmalate dehydratase large subunit, found in Lactococcus lactis subsp. cremoris (strain SK11).